A 150-amino-acid chain; its full sequence is Macrodomain Ter protein (150 aa).

This sequence belongs to the MatP family. In terms of assembly, homodimer.

Its subcellular location is the cytoplasm. In terms of biological role, required for spatial organization of the terminus region of the chromosome (Ter macrodomain) during the cell cycle. Prevents early segregation of duplicated Ter macrodomains during cell division. Binds specifically to matS, which is a 13 bp signature motif repeated within the Ter macrodomain. The protein is Macrodomain Ter protein of Citrobacter koseri (strain ATCC BAA-895 / CDC 4225-83 / SGSC4696).